Here is a 348-residue protein sequence, read N- to C-terminus: Small ribosomal subunit biogenesis GTPase RsgA (348 aa).

The segment at 1–32 is disordered; the sequence is MAKQKLTQNQKRRIHSNNAKALDRHRRQTKKQ. The region spanning 106-274 is the CP-type G domain; it reads KNELSRPDYY…LIDSPGIREF (169 aa). GTP is bound by residues 162-165 and 216-224; these read NKID and GQSGVGKSS. The Zn(2+) site is built by cysteine 298, cysteine 303, histidine 305, and cysteine 311.

This sequence belongs to the TRAFAC class YlqF/YawG GTPase family. RsgA subfamily. In terms of assembly, monomer. Associates with 30S ribosomal subunit, binds 16S rRNA. Requires Zn(2+) as cofactor.

It is found in the cytoplasm. Its function is as follows. One of several proteins that assist in the late maturation steps of the functional core of the 30S ribosomal subunit. Helps release RbfA from mature subunits. May play a role in the assembly of ribosomal proteins into the subunit. Circularly permuted GTPase that catalyzes slow GTP hydrolysis, GTPase activity is stimulated by the 30S ribosomal subunit. The chain is Small ribosomal subunit biogenesis GTPase RsgA from Actinobacillus succinogenes (strain ATCC 55618 / DSM 22257 / CCUG 43843 / 130Z).